We begin with the raw amino-acid sequence, 407 residues long: Protein S-acyltransferase 8 (407 aa).

Helical transmembrane passes span 29–49 and 62–82; these read SLPL…VFVA and GYAI…LLFF. The 51-residue stretch at 136 to 186 folds into the DHHC domain; sequence KYCDTCMLYRPPRCSHCSICNNCVERFDHHCPWVGQCIGLRNYRYFFMFVS. The active-site S-palmitoyl cysteine intermediate is the Cys166. 2 consecutive transmembrane segments (helical) span residues 181–201 and 224–244; these read FFMF…MSAV and AVVL…LTAF. The segment at 348-368 is disordered; it reads AEDANNNQPHHTLDIDHERAG. Positions 358–368 are enriched in basic and acidic residues; that stretch reads HTLDIDHERAG. A Phosphoserine modification is found at Ser385.

The protein belongs to the DHHC palmitoyltransferase family. Expressed in flowers and pollen.

Its subcellular location is the cell membrane. It carries out the reaction L-cysteinyl-[protein] + hexadecanoyl-CoA = S-hexadecanoyl-L-cysteinyl-[protein] + CoA. Its function is as follows. S-acyltransferase involved in protein lipid modification. In Arabidopsis thaliana (Mouse-ear cress), this protein is Protein S-acyltransferase 8 (PAT08).